A 768-amino-acid chain; its full sequence is MTISPPEKEQKKEPVLDKPIETDAIPVDFSKLDKPGFWSKSLAKGPKTTTWIWNLHADAHDFDTHVGDLQETSRKVFSAHFGHLAVIFIWMSAAFFHGARFSNYSGWLSDPTHVKPGAQVVWPIVGQEMLNADLGGNYHGIQITSGIFQMWRGWGITNETELMALAIGALLMAAIMLHGGIYHYHKAAPKLDWFRNLESMLNHHIAGLVGLGSIAWAGHCIHIGAPTAALMDAIDAGKPLIIDGIPIASIADMPLPHELCNPAIASQIFPGLAGRTVENFFTTNWWAFSDFLTFKGGLNPVTGSLWMTDISHHHLAFGVLAVLGGHLYRTMFGIGHSLKEILDNHAGDPILFPAPNGHKGIYEFLANSWHAQLGLNLAMIGSLSIIISHHMYAMPPYPYLSIDYPTVLGLFTHHMWIGGLFIVGAAAHAGIAMIRDYDPAVHIDNVLDRILKARDALISHLNWACMFLGFHSFGLYIHNDVMRALGRPADMFSDTGIQLQPVFAQWIQNIHNSAAGSTTLAGANVSLQPGLVSEVFNGSVSQVGGKIGIAPIPLGTADFMIHHIHAFTIHVTLLILLKGVLFARSSRLIPDKANLGFRFPCDGPGRGGTCQVSSWDHVFLGLFWMYNGLSVVIFHFSWKMQSDVWGLTGGNFAQSSITINGWLRDFLWAQSSQVLTSYGQPISMYGLMFLGAHFVWAFSLMFLFSGRGYWQELFESIIWAHNKLNLAPTIQPRALSITQGRAVGAAHFLLGGIATTWAFFHARLIGLG.

Helical transmembrane passes span 76 to 99 (VFSAHFGHLAVIFIWMSAAFFHGA), 162 to 185 (LMALAIGALLMAAIMLHGGIYHYH), 201 to 225 (LNHHIAGLVGLGSIAWAGHCIHIGA), 310 to 328 (ISHHHLAFGVLAVLGGHLY), 369 to 392 (WHAQLGLNLAMIGSLSIIISHHMY), 408 to 434 (LGLFTHHMWIGGLFIVGAAAHAGIAMI), 456 to 478 (ALISHLNWACMFLGFHSFGLYIH), and 559 to 577 (FMIHHIHAFTIHVTLLILL). The [4Fe-4S] cluster site is built by cysteine 601 and cysteine 610. The next 2 helical transmembrane spans lie at 617-638 (HVFLGLFWMYNGLSVVIFHFSW) and 682-704 (ISMYGLMFLGAHFVWAFSLMFLF). Position 693 (histidine 693) interacts with divinylchlorophyll a'. Positions 701 and 709 each coordinate divinyl chlorophyll a. Tryptophan 710 contributes to the phylloquinone binding site. Residues 742 to 762 (AVGAAHFLLGGIATTWAFFHA) traverse the membrane as a helical segment.

It belongs to the PsaA/PsaB family. In terms of assembly, the PsaA/B heterodimer binds the P700 divinyl chlorophyll special pair and subsequent electron acceptors. PSI consists of a core antenna complex that captures photons, and an electron transfer chain that converts photonic excitation into a charge separation. The cyanobacterial PSI reaction center is composed of one copy each of PsaA,B,C,D,E,F,I,J,K,L,M and X, and forms trimeric complexes. Requires PSI electron transfer chain: 5 divinyl chlorophyll a, 1 divinyl chlorophyll a', 2 phylloquinones and 3 4Fe-4S clusters. PSI core antenna: 90 divinyl chlorophyll a, 22 carotenoids, 3 phospholipids and 1 galactolipid. P700 is a divinyl chlorophyll a/divinyl chlorophyll a' dimer, A0 is one or more divinyl chlorophyll a, A1 is one or both phylloquinones and FX is a shared 4Fe-4S iron-sulfur center. as cofactor.

The protein localises to the cellular thylakoid membrane. The catalysed reaction is reduced [plastocyanin] + hnu + oxidized [2Fe-2S]-[ferredoxin] = oxidized [plastocyanin] + reduced [2Fe-2S]-[ferredoxin]. Functionally, psaA and PsaB bind P700, the primary electron donor of photosystem I (PSI), as well as the electron acceptors A0, A1 and FX. PSI is a plastocyanin/cytochrome c6-ferredoxin oxidoreductase, converting photonic excitation into a charge separation, which transfers an electron from the donor P700 chlorophyll pair to the spectroscopically characterized acceptors A0, A1, FX, FA and FB in turn. Oxidized P700 is reduced on the lumenal side of the thylakoid membrane by plastocyanin or cytochrome c6. This Prochlorococcus marinus (strain NATL2A) protein is Photosystem I P700 chlorophyll a apoprotein A1.